The following is a 129-amino-acid chain: Putative reactive intermediate deaminase TdcF (129 aa).

K58 bears the N6-(pyridoxal phosphate)lysine mark. Substrate is bound by residues 105 to 107 (RSC) and E120.

This sequence belongs to the RutC family. As to quaternary structure, homotrimer.

It participates in amino-acid degradation; L-threonine degradation via propanoate pathway. In terms of biological role, may be a post-translational regulator that controls the metabolic fate of L-threonine or the potentially toxic intermediate 2-ketobutyrate. The polypeptide is Putative reactive intermediate deaminase TdcF (tdcF) (Escherichia coli O6:H1 (strain CFT073 / ATCC 700928 / UPEC)).